Consider the following 74-residue polypeptide: RNA-binding protein Hfq (74 aa).

The Sm domain maps to 9-69 (DQFLNQLRKD…ISTFAPEKNV (61 aa)).

Belongs to the Hfq family. In terms of assembly, homohexamer.

RNA chaperone that binds small regulatory RNA (sRNAs) and mRNAs to facilitate mRNA translational regulation in response to envelope stress, environmental stress and changes in metabolite concentrations. Also binds with high specificity to tRNAs. This Geobacillus sp. (strain WCH70) protein is RNA-binding protein Hfq.